Here is a 143-residue protein sequence, read N- to C-terminus: MATVPGQLIWEIVKRNNCFLVKQFGRGNAKVQFSKESNNLVNINSYKHSGLANKKTVTIQAAGKDQGVVLGTTKTKRQNKPKLSVNKSILKKEFSRMSKVVANQVVDNYYRPDLKKAALARLSAISKGLRVAKSGPKRRNRQA.

Belongs to the eukaryotic ribosomal protein eL28 family.

This Arabidopsis thaliana (Mouse-ear cress) protein is Large ribosomal subunit protein eL28y (RPL28C).